The following is a 251-amino-acid chain: HTH-type transcriptional regulator UlaR (251 aa).

The HTH deoR-type domain occupies 3–58; that stretch reads EAQRHQILLDMLAQLGFVTVENVIERLGISPATARRDINKLDESGKLKKVRNGAEA. Positions 20-39 form a DNA-binding region, H-T-H motif; sequence VTVENVIERLGISPATARRD.

It is found in the cytoplasm. Functionally, represses ulaG and the ulaABCDEF operon. The sequence is that of HTH-type transcriptional regulator UlaR from Salmonella agona (strain SL483).